We begin with the raw amino-acid sequence, 640 residues long: Endoglucanase 2 (640 aa).

The N-terminal stretch at 1-34 (MARGGGAAGVSMAHHLGIALVVLVFAAMAQVARG) is a signal peptide. The Nucleophile role is filled by aspartate 93. Residues histidine 428, aspartate 480, and glutamate 489 contribute to the active site. A propeptide spans 512 to 640 (RARGRLGQSL…DVWVTGYKLV (129 aa)) (removed in mature form). Asparagine 528 carries an N-linked (GlcNAc...) asparagine glycan.

This sequence belongs to the glycosyl hydrolase 9 (cellulase E) family. Expressed in roots and flowers.

It localises to the secreted. The catalysed reaction is Endohydrolysis of (1-&gt;4)-beta-D-glucosidic linkages in cellulose, lichenin and cereal beta-D-glucans.. Functionally, hydrolyzes 1,4-beta-glycosyl linkages of 1,4-beta-glucans and 1,3-1,4-beta-glucans. Possesses broad substrate specificity for hemicelluloses of type II cell walls. Substrate preference is carboxymethyl-cellulose &gt; 1,3-1,4-beta-glucan &gt; lichenan &gt; arabinoxylan &gt; phospho-swollen cellulose &gt; xylan &gt; glucomannan. May participate in lateral root development. The protein is Endoglucanase 2 (GLU5) of Oryza sativa subsp. japonica (Rice).